Consider the following 557-residue polypeptide: Arginine--tRNA ligase (557 aa).

The 'HIGH' region motif lies at 132–142 (ANPTGDLHLGH).

Belongs to the class-I aminoacyl-tRNA synthetase family. In terms of assembly, monomer.

Its subcellular location is the cytoplasm. It catalyses the reaction tRNA(Arg) + L-arginine + ATP = L-arginyl-tRNA(Arg) + AMP + diphosphate. In Bacillus pumilus (strain SAFR-032), this protein is Arginine--tRNA ligase.